The sequence spans 20 residues: Hemoglobinase-like protein 1 (20 aa).

The protein belongs to the peptidase C13 family.

The catalysed reaction is Hydrolysis of proteins and small molecule substrates at -Asn-|-Xaa- bonds.. In Fasciola hepatica (Liver fluke), this protein is Hemoglobinase-like protein 1.